The primary structure comprises 977 residues: Protein bric-a-brac 1 (977 aa).

The tract at residues Met-1–Ser-97 is disordered. A compositionally biased stretch (polar residues) spans Pro-34–Gln-43. Residues Gln-44–Gln-69 are compositionally biased toward basic and acidic residues. Positions Ser-80–Ser-97 are enriched in low complexity. One can recognise a BTB domain in the interval Val-127–Gln-192. Disordered stretches follow at residues Ala-221–Glu-249, Glu-281–Val-348, Asp-362–Leu-434, and Ser-447–Leu-497. The span at Glu-316–Asp-330 shows a compositional bias: basic and acidic residues. Low complexity predominate over residues Pro-372–Pro-396. A compositionally biased stretch (gly residues) spans Gly-469 to Ser-491. The 53-residue stretch at Phe-559 to Met-611 folds into the HTH psq-type domain. The segment at residues Arg-569 to Pro-614 is a DNA-binding region (H-T-H motif). The segment at residues Asp-621 to Arg-632 is a DNA-binding region (a.T hook). Disordered stretches follow at residues Ala-772–Leu-900 and Val-925–Glu-977. Composition is skewed to low complexity over residues Met-804–Ala-816, Gln-838–Gln-853, Ala-862–Ser-872, and Val-925–Gly-966.

In terms of tissue distribution, leg imaginal disk at the central region of the tarsus and in eye antenna disk at the basal cylinder.

The protein localises to the nucleus. Its function is as follows. Probably acts as a transcriptional regulator. Required for the specification of the tarsal segment. Also involved in antenna development. The chain is Protein bric-a-brac 1 (bab1) from Drosophila melanogaster (Fruit fly).